The following is a 437-amino-acid chain: GTPase Der (437 aa).

EngA-type G domains are found at residues 4-167 and 176-351; these read PVIA…PEDE and IRIS…ENHN. GTP is bound by residues 10-17, 57-61, 119-122, 182-189, 229-233, and 294-297; these read GRPNVGKS, DTGGI, NKID, DTAGM, and NKWD. Residues 352-436 enclose the KH-like domain; sequence LRVPTHVLND…PIKIIARKKN (85 aa).

It belongs to the TRAFAC class TrmE-Era-EngA-EngB-Septin-like GTPase superfamily. EngA (Der) GTPase family. As to quaternary structure, associates with the 50S ribosomal subunit.

GTPase that plays an essential role in the late steps of ribosome biogenesis. In Halalkalibacterium halodurans (strain ATCC BAA-125 / DSM 18197 / FERM 7344 / JCM 9153 / C-125) (Bacillus halodurans), this protein is GTPase Der.